The following is a 160-amino-acid chain: Troponin C, skeletal muscle (160 aa).

EF-hand domains are found at residues 15–50 (EMIA…LGQN), 51–86 (PTRE…QLKE), 91–126 (KSEE…SGEP), and 127–160 (VSEE…ENIQ). 18 residues coordinate Ca(2+): Asp-28, Asp-30, Asp-34, Glu-39, Asp-64, Asp-66, Ser-68, Thr-70, Glu-75, Asp-104, Asn-106, Asp-108, Glu-115, Asp-140, Asn-142, Asp-144, Lys-146, and Glu-151.

This sequence belongs to the troponin C family.

Functionally, troponin is the central regulatory protein of striated muscle contraction. Tn consists of three components: Tn-I which is the inhibitor of actomyosin ATPase, Tn-T which contains the binding EF-hand for tropomyosin and Tn-C. The binding of calcium to Tn-C abolishes the inhibitory action of Tn on actin filaments. The polypeptide is Troponin C, skeletal muscle (Anguilla anguilla (European freshwater eel)).